Consider the following 384-residue polypeptide: Deoxyguanosinetriphosphate triphosphohydrolase-like protein (384 aa).

The 137-residue stretch at 62-198 (RLTHSLEVST…AALADDISYI (137 aa)) folds into the HD domain.

This sequence belongs to the dGTPase family. Type 2 subfamily.

This is Deoxyguanosinetriphosphate triphosphohydrolase-like protein from Rickettsia peacockii (strain Rustic).